Here is an 872-residue protein sequence, read N- to C-terminus: Alanine--tRNA ligase (872 aa).

Residues His-563, His-567, Cys-665, and His-669 each contribute to the Zn(2+) site.

It belongs to the class-II aminoacyl-tRNA synthetase family. It depends on Zn(2+) as a cofactor.

The protein resides in the cytoplasm. It carries out the reaction tRNA(Ala) + L-alanine + ATP = L-alanyl-tRNA(Ala) + AMP + diphosphate. In terms of biological role, catalyzes the attachment of alanine to tRNA(Ala) in a two-step reaction: alanine is first activated by ATP to form Ala-AMP and then transferred to the acceptor end of tRNA(Ala). Also edits incorrectly charged Ser-tRNA(Ala) and Gly-tRNA(Ala) via its editing domain. In Bacteroides fragilis (strain ATCC 25285 / DSM 2151 / CCUG 4856 / JCM 11019 / LMG 10263 / NCTC 9343 / Onslow / VPI 2553 / EN-2), this protein is Alanine--tRNA ligase.